A 2173-amino-acid polypeptide reads, in one-letter code: Mediator of RNA polymerase II transcription subunit 12 (2173 aa).

Disordered stretches follow at residues 1 to 34 (MAAFGVLSYEHRPLKRPRLGPPDVYPQDPKQKED), 318 to 345 (GGHQAHGISAQQGNALPPTPTSQPAGGN), 630 to 718 (ASNS…KGMD), 784 to 804 (KSTAETGGEEGQKRKRSKPEA), 1380 to 1404 (MNSSNPSWNGSAVSGSSVSNSNSAS), 1443 to 1467 (ELEKGQHLGPSSRKERDRQKQKSMS), 1737 to 1780 (EEEP…VKQE), and 2020 to 2068 (QGIH…FRPQ). The segment covering 702 to 717 (QAQEQESKSTAKDKGM) has biased composition (basic and acidic residues). Positions 1389-1404 (GSAVSGSSVSNSNSAS) are enriched in low complexity. 2 stretches are compositionally biased toward basic and acidic residues: residues 1443–1462 (ELEKGQHLGPSSRKERDRQK) and 1747–1759 (EPDKKLDTAKVEK). Low complexity predominate over residues 2034 to 2057 (QQQQQQQQQQQQQQQQQQVHQQQQ).

It belongs to the Mediator complex subunit 12 family. In terms of assembly, component of the Mediator complex.

It localises to the nucleus. Component of the Mediator complex, a coactivator involved in regulated gene transcription of nearly all RNA polymerase II-dependent genes. Mediator functions as a bridge to convey information from gene-specific regulatory proteins to the basal RNA polymerase II transcription machinery. Mediator is recruited to promoters by direct interactions with regulatory proteins and serves as a scaffold for the assembly of a functional preinitiation complex with RNA polymerase II and the general transcription factors. Required for development of the body axis, brain, ear, kidney, forelimb and neural crest and for pigmentation. Acts as a coactivator for sox9a and/or sox9b promoting the expression of several neuronal determination genes. The sequence is that of Mediator of RNA polymerase II transcription subunit 12 (med12) from Danio rerio (Zebrafish).